The sequence spans 300 residues: Fructose-bisphosphate aldolase class 1 (300 aa).

Residue Glu181 is the Proton acceptor of the active site. Lys218 functions as the Schiff-base intermediate with dihydroxyacetone-P in the catalytic mechanism.

The protein belongs to the class I fructose-bisphosphate aldolase family.

It catalyses the reaction beta-D-fructose 1,6-bisphosphate = D-glyceraldehyde 3-phosphate + dihydroxyacetone phosphate. It functions in the pathway carbohydrate degradation; glycolysis; D-glyceraldehyde 3-phosphate and glycerone phosphate from D-glucose: step 4/4. The chain is Fructose-bisphosphate aldolase class 1 (fda) from Synechocystis sp. (strain ATCC 27184 / PCC 6803 / Kazusa).